Consider the following 463-residue polypeptide: Chromosomal replication initiator protein DnaA (463 aa).

The segment at 1-84 (MNTNQIILTN…QLFQHYNNAI (84 aa)) is domain I, interacts with DnaA modulators. The domain II stretch occupies residues 84 to 124 (IKTVEIITKELPASNQATLELPTKTFADIGSSELNSENIFS). Residues 125–343 (TFDIRFTFDN…GALNKVIAHS (219 aa)) form a domain III, AAA+ region region. ATP contacts are provided by glycine 171, glycine 173, lysine 174, and threonine 175. The domain IV, binds dsDNA stretch occupies residues 344–463 (NFTAKEITLE…INLMMKILQN (120 aa)).

It belongs to the DnaA family. Oligomerizes as a right-handed, spiral filament on DNA at oriC.

Its subcellular location is the cytoplasm. Its function is as follows. Plays an essential role in the initiation and regulation of chromosomal replication. ATP-DnaA binds to the origin of replication (oriC) to initiate formation of the DNA replication initiation complex once per cell cycle. Binds the DnaA box (a 9 base pair repeat at the origin) and separates the double-stranded (ds)DNA. Forms a right-handed helical filament on oriC DNA; dsDNA binds to the exterior of the filament while single-stranded (ss)DNA is stabiized in the filament's interior. The ATP-DnaA-oriC complex binds and stabilizes one strand of the AT-rich DNA unwinding element (DUE), permitting loading of DNA polymerase. After initiation quickly degrades to an ADP-DnaA complex that is not apt for DNA replication. Binds acidic phospholipids. The chain is Chromosomal replication initiator protein DnaA from Rickettsia bellii (strain RML369-C).